Here is a 351-residue protein sequence, read N- to C-terminus: Probable protein phosphatase 2C 41 (351 aa).

The PPM-type phosphatase domain maps to 62–348 (FTSICSNRGE…DDISVLCLFF (287 aa)). The Mn(2+) site is built by Asp-98, Gly-99, Asp-293, and Asp-339.

It belongs to the PP2C family. The cofactor is Mg(2+). Mn(2+) serves as cofactor.

It carries out the reaction O-phospho-L-seryl-[protein] + H2O = L-seryl-[protein] + phosphate. The catalysed reaction is O-phospho-L-threonyl-[protein] + H2O = L-threonyl-[protein] + phosphate. This chain is Probable protein phosphatase 2C 41, found in Arabidopsis thaliana (Mouse-ear cress).